Reading from the N-terminus, the 300-residue chain is Dihydroorotate dehydrogenase B (NAD(+)), catalytic subunit (300 aa).

Residues Ser-20 and 44–45 (KG) contribute to the FMN site. Substrate is bound by residues Lys-44 and 68-72 (NSVGL). Residues Asn-98 and Asn-124 each contribute to the FMN site. Asn-124 contributes to the substrate binding site. Residue Cys-127 is the Nucleophile of the active site. The FMN site is built by Lys-162 and Ile-188. 189–190 (NT) provides a ligand contact to substrate. Residues Gly-214, 240–241 (GG), and 262–263 (GT) contribute to the FMN site.

Belongs to the dihydroorotate dehydrogenase family. Type 1 subfamily. Heterotetramer of 2 PyrK and 2 PyrD type B subunits. It depends on FMN as a cofactor.

The protein resides in the cytoplasm. It catalyses the reaction (S)-dihydroorotate + NAD(+) = orotate + NADH + H(+). It functions in the pathway pyrimidine metabolism; UMP biosynthesis via de novo pathway; orotate from (S)-dihydroorotate (NAD(+) route): step 1/1. In terms of biological role, catalyzes the conversion of dihydroorotate to orotate with NAD(+) as electron acceptor. This Caldicellulosiruptor saccharolyticus (strain ATCC 43494 / DSM 8903 / Tp8T 6331) protein is Dihydroorotate dehydrogenase B (NAD(+)), catalytic subunit (pyrD).